The primary structure comprises 396 residues: Arginine biosynthesis bifunctional protein ArgJ (396 aa).

6 residues coordinate substrate: Thr150, Lys177, Thr188, Glu267, Asn391, and Thr396. Thr188 acts as the Nucleophile in catalysis.

Belongs to the ArgJ family. Heterotetramer of two alpha and two beta chains.

The protein localises to the cytoplasm. It catalyses the reaction N(2)-acetyl-L-ornithine + L-glutamate = N-acetyl-L-glutamate + L-ornithine. The enzyme catalyses L-glutamate + acetyl-CoA = N-acetyl-L-glutamate + CoA + H(+). The protein operates within amino-acid biosynthesis; L-arginine biosynthesis; L-ornithine and N-acetyl-L-glutamate from L-glutamate and N(2)-acetyl-L-ornithine (cyclic): step 1/1. Its pathway is amino-acid biosynthesis; L-arginine biosynthesis; N(2)-acetyl-L-ornithine from L-glutamate: step 1/4. Its function is as follows. Catalyzes two activities which are involved in the cyclic version of arginine biosynthesis: the synthesis of N-acetylglutamate from glutamate and acetyl-CoA as the acetyl donor, and of ornithine by transacetylation between N(2)-acetylornithine and glutamate. The sequence is that of Arginine biosynthesis bifunctional protein ArgJ from Wolinella succinogenes (strain ATCC 29543 / DSM 1740 / CCUG 13145 / JCM 31913 / LMG 7466 / NCTC 11488 / FDC 602W) (Vibrio succinogenes).